A 419-amino-acid polypeptide reads, in one-letter code: MNLTELKNTPVSELITLGENMGLENLARMRKQDIIFAILKQHAKSGEDIFGDGVLEILQDGFGFLRSADSSYLAGPDDIYVSPSQIRRFNLRTGDTISGKIRPPKEGERYFALLKVNEVNFDKPENARNKILFENLTPLHANSRLRMERGNGSTEDLTARVLDLASPIGRGQRGLIVAPPKAGKTMLLQNIAQSIAYNHPDCVLMVLLIDERPEEVTEMQRLVKGEVVASTFDEPASRHVQVAEMVIEKAKRLVEHKKDVIILLDSITRLARAYNTVVPASGKVLTGGVDANALHRPKRFFGAARNVEEGGSLTIIATALIDTGSKMDEVIYEEFKGTGNMELHLSRKIAEKRVFPAIDYNRSGTRKEELLTTQEELQKMWILRKIIHPMGEIDAMEFLINKLAMTKTNDDFFEMMKRS.

The region spanning 48–123 (DIFGDGVLEI…LKVNEVNFDK (76 aa)) is the Rho RNA-BD domain. RNA-binding stretches follow at residues 61–66 (GFGFLR), 78–80 (DIY), and 108–110 (ERY). ATP is bound by residues 169-174 (GRGQRG), 181-186 (KAGKTM), and R212. Residues 284–288 (VLTGG) form an RNA-binding 2 region.

This sequence belongs to the Rho family. In terms of assembly, homohexamer. The homohexamer assembles into an open ring structure.

In terms of biological role, facilitates transcription termination by a mechanism that involves Rho binding to the nascent RNA, activation of Rho's RNA-dependent ATPase activity, and release of the mRNA from the DNA template. The sequence is that of Transcription termination factor Rho from Escherichia coli O157:H7.